Reading from the N-terminus, the 185-residue chain is Lipid A acyltransferase PagP (185 aa).

Positions 1-14 (MKLKPVLYLLMLLG) are cleaved as a signal peptide. Cys15 is lipidated: N-palmitoyl cysteine. Cys15 carries S-diacylglycerol cysteine lipidation. Residues His57, Asp100, and Ser101 contribute to the active site.

This sequence belongs to the lipid A palmitoyltransferase family. As to quaternary structure, homodimer.

It is found in the cell outer membrane. The catalysed reaction is a lipid A + a 1,2-diacyl-sn-glycero-3-phosphocholine = a hepta-acyl lipid A + a 2-acyl-sn-glycero-3-phosphocholine. The enzyme catalyses a lipid IVA + a 1,2-diacyl-sn-glycero-3-phosphocholine = a lipid IVB + a 2-acyl-sn-glycero-3-phosphocholine. It catalyses the reaction a lipid IIA + a 1,2-diacyl-sn-glycero-3-phosphocholine = a lipid IIB + a 2-acyl-sn-glycero-3-phosphocholine. In terms of biological role, transfers a fatty acid residue from the sn-1 position of a phospholipid to the N-linked hydroxyfatty acid chain on the proximal unit of lipid A or its precursors. This is Lipid A acyltransferase PagP from Erwinia pyrifoliae (strain DSM 12163 / CIP 106111 / Ep16/96).